The primary structure comprises 173 residues: Placenta-specific protein 1 (173 aa).

A signal peptide spans 1 to 23 (MNLRKFLGGTVLVAFMLFSYSEQ).

The protein belongs to the PLAC1 family. Expressed in placenta.

The protein localises to the secreted. May play a role in placental development. This Mus musculus (Mouse) protein is Placenta-specific protein 1.